The chain runs to 400 residues: CCA-adding enzyme (400 aa).

ATP contacts are provided by G28 and R31. The CTP site is built by G28 and R31. Residues D41 and D43 each coordinate Mg(2+). ATP-binding residues include R112, D155, R158, R161, and R164. CTP is bound by residues R112, D155, R158, R161, and R164.

It belongs to the tRNA nucleotidyltransferase/poly(A) polymerase family. Bacterial CCA-adding enzyme type 3 subfamily. In terms of assembly, homodimer. Mg(2+) is required as a cofactor.

It carries out the reaction a tRNA precursor + 2 CTP + ATP = a tRNA with a 3' CCA end + 3 diphosphate. The catalysed reaction is a tRNA with a 3' CCA end + 2 CTP + ATP = a tRNA with a 3' CCACCA end + 3 diphosphate. Its function is as follows. Catalyzes the addition and repair of the essential 3'-terminal CCA sequence in tRNAs without using a nucleic acid template. Adds these three nucleotides in the order of C, C, and A to the tRNA nucleotide-73, using CTP and ATP as substrates and producing inorganic pyrophosphate. tRNA 3'-terminal CCA addition is required both for tRNA processing and repair. Also involved in tRNA surveillance by mediating tandem CCA addition to generate a CCACCA at the 3' terminus of unstable tRNAs. While stable tRNAs receive only 3'-terminal CCA, unstable tRNAs are marked with CCACCA and rapidly degraded. This chain is CCA-adding enzyme, found in Staphylococcus aureus (strain COL).